A 144-amino-acid chain; its full sequence is Phospholipase A2 (144 aa).

The first 15 residues, 1 to 15 (MKFLVLAALLTAGTA), serve as a signal peptide directing secretion. Positions 16–22 (ASGVSPT) are cleaved as a propeptide — activation peptide. 7 disulfide bridges follow: C33/C99, C49/C144, C51/C67, C66/C127, C73/C120, C83/C113, and C106/C118. 3 residues coordinate Ca(2+): Y50, G52, and G54. H70 is a catalytic residue. Residue D71 coordinates Ca(2+). D121 is a catalytic residue.

The protein belongs to the phospholipase A2 family. In terms of assembly, monomer or homodimer. The cofactor is Ca(2+). Activated by trypsin cleavage in the duodenum. Can also be activated by thrombin or autocatalytically.

It localises to the secreted. It carries out the reaction a 1,2-diacyl-sn-glycero-3-phosphocholine + H2O = a 1-acyl-sn-glycero-3-phosphocholine + a fatty acid + H(+). It catalyses the reaction 1,2-ditetradecanoyl-sn-glycero-3-phosphocholine + H2O = 1-tetradecanoyl-sn-glycero-3-phosphocholine + tetradecanoate + H(+). The catalysed reaction is 1,2-dihexadecanoyl-sn-glycero-3-phosphocholine + H2O = 1-hexadecanoyl-sn-glycero-3-phosphocholine + hexadecanoate + H(+). The enzyme catalyses 1-hexadecanoyl-2-(9Z-octadecenoyl)-sn-glycero-3-phosphocholine + H2O = 1-hexadecanoyl-sn-glycero-3-phosphocholine + (9Z)-octadecenoate + H(+). It carries out the reaction 1-hexadecanoyl-2-(5Z,8Z,11Z,14Z-eicosatetraenoyl)-sn-glycero-3-phosphocholine + H2O = 1-hexadecanoyl-sn-glycero-3-phosphocholine + (5Z,8Z,11Z,14Z)-eicosatetraenoate + H(+). It catalyses the reaction 1-hexadecanoyl-2-(9Z-octadecenoyl)-sn-glycero-3-phospho-(1'-sn-glycerol) + H2O = 1-hexadecanoyl-sn-glycero-3-phospho-(1'-sn-glycerol) + (9Z)-octadecenoate + H(+). The catalysed reaction is N-hexadecanoyl-1,2-di-(9Z-octadecenoyl)-sn-glycero-3-phosphoethanolamine + H2O = N-hexadecanoyl-1-(9Z-octadecenoyl)-sn-glycero-3-phosphoethanolamine + (9Z)-octadecenoate + H(+). The enzyme catalyses 1-hexadecanoyl-2-(9Z,12Z-octadecadienoyl)-sn-glycero-3-phosphoethanolamine + H2O = 1-hexadecanoyl-sn-glycero-3-phosphoethanolamine + (9Z,12Z)-octadecadienoate + H(+). It carries out the reaction N,1-dihexadecanoyl-2-(9Z,12Z-octadecadienoyl)-sn-glycero-3-phosphoethanolamine + H2O = N,1-dihexadecanoyl-sn-glycero-3-phosphoethanolamine + (9Z,12Z)-octadecadienoate + H(+). Secretory calcium-dependent phospholipase A2 that primarily targets dietary phospholipids in the intestinal tract. Hydrolyzes the ester bond of the fatty acyl group attached at sn-2 position of phospholipids (phospholipase A2 activity) with preference for phosphatidylethanolamines and phosphatidylglycerols over phosphatidylcholines. May play a role in the biosynthesis of N-acyl ethanolamines that regulate energy metabolism and inflammation in the intestinal tract. Hydrolyzes N-acyl phosphatidylethanolamines to N-acyl lysophosphatidylethanolamines, which are further cleaved by a lysophospholipase D to release N-acyl ethanolamines. May act in an autocrine and paracrine manner. Has anti-helminth activity in a process regulated by gut microbiota. Upon helminth infection of intestinal epithelia, directly affects phosphatidylethanolamine contents in the membrane of helminth larvae, likely controlling an array of phospholipid-mediated cellular processes such as membrane fusion and cell division while providing for better immune recognition, ultimately reducing larvae integrity and infectivity. The sequence is that of Phospholipase A2 (PLA2G1B) from Oryctolagus cuniculus (Rabbit).